A 326-amino-acid polypeptide reads, in one-letter code: tRNA uridine(34) hydroxylase (326 aa).

The Rhodanese domain maps to 123–217 (ADPEVFVVDT…YLEEVPQEES (95 aa)). Cys-177 (cysteine persulfide intermediate) is an active-site residue. The span at 278–288 (QVERFREREKQ) shows a compositional bias: basic and acidic residues. The tract at residues 278–326 (QVERFREREKQVSLANQRGEQHVGGESAKQRAQRREAKLAKKAAQRKQA) is disordered. A compositionally biased stretch (basic residues) spans 317 to 326 (AKKAAQRKQA).

Belongs to the TrhO family.

The catalysed reaction is uridine(34) in tRNA + AH2 + O2 = 5-hydroxyuridine(34) in tRNA + A + H2O. Its function is as follows. Catalyzes oxygen-dependent 5-hydroxyuridine (ho5U) modification at position 34 in tRNAs. This Vibrio parahaemolyticus serotype O3:K6 (strain RIMD 2210633) protein is tRNA uridine(34) hydroxylase.